Reading from the N-terminus, the 162-residue chain is Ribosome maturation factor RimP (162 aa).

This sequence belongs to the RimP family.

Its subcellular location is the cytoplasm. Its function is as follows. Required for maturation of 30S ribosomal subunits. The polypeptide is Ribosome maturation factor RimP (Cupriavidus necator (strain ATCC 17699 / DSM 428 / KCTC 22496 / NCIMB 10442 / H16 / Stanier 337) (Ralstonia eutropha)).